Consider the following 160-residue polypeptide: Small ribosomal subunit protein uS7 (160 aa).

Belongs to the universal ribosomal protein uS7 family. As to quaternary structure, part of the 30S ribosomal subunit. Contacts proteins S9 and S11.

Functionally, one of the primary rRNA binding proteins, it binds directly to 16S rRNA where it nucleates assembly of the head domain of the 30S subunit. Is located at the subunit interface close to the decoding center, probably blocks exit of the E-site tRNA. The protein is Small ribosomal subunit protein uS7 of Anaplasma phagocytophilum (strain HZ).